A 152-amino-acid polypeptide reads, in one-letter code: Transcriptional repressor NrdR (152 aa).

A zinc finger spans residues 3-34 (CPFCGHADTQVVDSRVSEDGASIRRRRRCLEC). The ATP-cone domain maps to 49–139 (PQVVKQDGHR…VYRSFQDVAE (91 aa)).

It belongs to the NrdR family. The cofactor is Zn(2+).

In terms of biological role, negatively regulates transcription of bacterial ribonucleotide reductase nrd genes and operons by binding to NrdR-boxes. The chain is Transcriptional repressor NrdR from Laribacter hongkongensis (strain HLHK9).